A 102-amino-acid polypeptide reads, in one-letter code: Flagellar hook-basal body complex protein FliE (102 aa).

The protein belongs to the FliE family.

The protein resides in the bacterial flagellum basal body. The chain is Flagellar hook-basal body complex protein FliE from Halalkalibacterium halodurans (strain ATCC BAA-125 / DSM 18197 / FERM 7344 / JCM 9153 / C-125) (Bacillus halodurans).